Consider the following 150-residue polypeptide: Nucleoside diphosphate kinase (150 aa).

6 residues coordinate ATP: Lys-9, Phe-57, Arg-85, Thr-91, Arg-102, and Asn-112. The Pros-phosphohistidine intermediate role is filled by His-115.

The protein belongs to the NDK family. Homotetramer. Mg(2+) serves as cofactor.

It is found in the cytoplasm. It catalyses the reaction a 2'-deoxyribonucleoside 5'-diphosphate + ATP = a 2'-deoxyribonucleoside 5'-triphosphate + ADP. The catalysed reaction is a ribonucleoside 5'-diphosphate + ATP = a ribonucleoside 5'-triphosphate + ADP. Functionally, major role in the synthesis of nucleoside triphosphates other than ATP. The ATP gamma phosphate is transferred to the NDP beta phosphate via a ping-pong mechanism, using a phosphorylated active-site intermediate. This chain is Nucleoside diphosphate kinase, found in Symbiobacterium thermophilum (strain DSM 24528 / JCM 14929 / IAM 14863 / T).